An 819-amino-acid polypeptide reads, in one-letter code: THO complex subunit 5B (819 aa).

Positions Ala-285–Asp-332 are disordered.

This sequence belongs to the THOC5 family. As to quaternary structure, component of the THO complex, which is composed of THO1, THO2, THO3, THO5, THO6 and THO7.

It is found in the nucleus. Its function is as follows. Acts as a component of the THO subcomplex of the TREX complex which is thought to couple mRNA transcription, processing and nuclear export. This Arabidopsis thaliana (Mouse-ear cress) protein is THO complex subunit 5B (THO5B).